The sequence spans 23 residues: Basic phospholipase A2 homolog Vur-S49 analog (23 aa).

Positions 1–23 (SVLEIGLMLQEETEKNPKTSYSI) are disordered.

Post-translationally, contains 7 disulfide bonds. As to expression, expressed by the venom gland.

The protein resides in the secreted. The protein is Basic phospholipase A2 homolog Vur-S49 analog of Vipera renardi (Steppe viper).